Reading from the N-terminus, the 443-residue chain is Nuclear pore complex-interacting protein family member B15 (443 aa).

The first 18 residues, 1-18 (MRLRFWLLIWLLLGFISH), serve as a signal peptide directing secretion. N-linked (GlcNAc...) asparagine glycosylation is present at Asn111. Disordered regions lie at residues 242–262 (RMGR…NSLS) and 330–413 (SPLP…TRHC). Over residues 252-262 (QQHSITDNSLS) the composition is skewed to polar residues. Residues 351–393 (EAEKPPKPKRWRVDEVEQSPKPKRRRADEVEQSPKPKRQREAE) are compositionally biased toward basic and acidic residues. The span at 399 to 412 (KPKRRRLSKLRTRH) shows a compositional bias: basic residues.

Belongs to the NPIP family.

It is found in the secreted. This Homo sapiens (Human) protein is Nuclear pore complex-interacting protein family member B15 (NPIPB15).